A 276-amino-acid chain; its full sequence is NADPH-dependent 7-cyano-7-deazaguanine reductase (276 aa).

Substrate is bound at residue 80 to 82 (VES). Position 82-83 (82-83 (SK)) interacts with NADPH. Catalysis depends on cysteine 183, which acts as the Thioimide intermediate. Aspartate 190 functions as the Proton donor in the catalytic mechanism. 222-223 (HE) provides a ligand contact to substrate. Position 251–252 (251–252 (RG)) interacts with NADPH.

Belongs to the GTP cyclohydrolase I family. QueF type 2 subfamily. As to quaternary structure, homodimer.

Its subcellular location is the cytoplasm. It catalyses the reaction 7-aminomethyl-7-carbaguanine + 2 NADP(+) = 7-cyano-7-deazaguanine + 2 NADPH + 3 H(+). Its pathway is tRNA modification; tRNA-queuosine biosynthesis. Its function is as follows. Catalyzes the NADPH-dependent reduction of 7-cyano-7-deazaguanine (preQ0) to 7-aminomethyl-7-deazaguanine (preQ1). The protein is NADPH-dependent 7-cyano-7-deazaguanine reductase of Burkholderia orbicola (strain MC0-3).